We begin with the raw amino-acid sequence, 409 residues long: Nucleoprotein (409 aa).

Disordered stretches follow at residues 1–64 and 167–197; these read MSAG…SNVK and RNSS…VDDD. The interval 30 to 161 is RNA-binding; that stretch reads GTGQASWFQS…NNYRWDFIAL (132 aa). One can recognise a CoV N NTD domain in the interval 32–157; it reads GQASWFQSLK…GGPDNNYRWD (126 aa). Basic and acidic residues predominate over residues 176 to 197; sequence ENSRPGSRDSSRGRQRSRVDDD. Ser192 carries the post-translational modification Phosphoserine; by host. Residues 217 to 333 form the CoV N CTD domain; it reads SKQKANEMAE…ECVDGVGTRP (117 aa). The segment at 228–335 is dimerization; sequence KYHKRAIAPG…VDGVGTRPKD (108 aa). The cysteines at positions 322 and 325 are disulfide-linked. Residues 327–409 form a disordered region; it reads DGVGTRPKDD…GEGAFDDINI (83 aa). The segment covering 332–349 has biased composition (basic and acidic residues); the sequence is RPKDDPTPRSRAASKDRN. Thr374 carries the phosphothreonine; by host modification.

The protein belongs to the gammacoronavirus nucleocapsid protein family. As to quaternary structure, homooligomer. Both monomeric and oligomeric forms interact with RNA. Interacts with protein M. Interacts with NSP3; this interaction serves to tether the genome to the newly translated replicase-transcriptase complex at a very early stage of infection. Post-translationally, ADP-ribosylated. The ADP-ribosylation is retained in the virion during infection. In terms of processing, phosphorylated on serine and threonine residues.

The protein resides in the virion. It is found in the host endoplasmic reticulum-Golgi intermediate compartment. The protein localises to the host Golgi apparatus. In terms of biological role, packages the positive strand viral genome RNA into a helical ribonucleocapsid (RNP) and plays a fundamental role during virion assembly through its interactions with the viral genome and membrane protein M. Plays an important role in enhancing the efficiency of subgenomic viral RNA transcription as well as viral replication. The chain is Nucleoprotein from Gallus gallus (Chicken).